We begin with the raw amino-acid sequence, 340 residues long: tRNA-specific 2-thiouridylase MnmA (340 aa).

ATP is bound by residues 6 to 13 and M32; that span reads AMSGGVDS. C92 (nucleophile) is an active-site residue. C92 and C186 form a disulfide bridge. G116 lines the ATP pocket. An interaction with tRNA region spans residues 134–136; the sequence is KDQ. C186 serves as the catalytic Cysteine persulfide intermediate. The interaction with tRNA stretch occupies residues 288-289; the sequence is RY.

This sequence belongs to the MnmA/TRMU family.

Its subcellular location is the cytoplasm. The enzyme catalyses S-sulfanyl-L-cysteinyl-[protein] + uridine(34) in tRNA + AH2 + ATP = 2-thiouridine(34) in tRNA + L-cysteinyl-[protein] + A + AMP + diphosphate + H(+). Functionally, catalyzes the 2-thiolation of uridine at the wobble position (U34) of tRNA, leading to the formation of s(2)U34. The polypeptide is tRNA-specific 2-thiouridylase MnmA (Campylobacter concisus (strain 13826)).